The sequence spans 356 residues: Cyanide hydratase (356 aa).

Positions 6–285 constitute a CN hydrolase domain; the sequence is YKAAAVTSEP…DGLLFVDIDL (280 aa). The active-site Proton acceptor is Glu-46. The active site involves Lys-128. The active-site Nucleophile is the Cys-163.

This sequence belongs to the carbon-nitrogen hydrolase superfamily. Nitrilase family. As to quaternary structure, oligomer of dimers, forming left-handed helical fibers.

The enzyme catalyses formamide = hydrogen cyanide + H2O. Its function is as follows. Catalyzes the hydration of cyanide to formamide. Degradation of cyanide may be important for plant pathogenic fungi in infection of cyanogenic plants. The chain is Cyanide hydratase from Leptosphaeria maculans (Blackleg fungus).